Reading from the N-terminus, the 295-residue chain is Protoheme IX farnesyltransferase (295 aa).

9 helical membrane-spanning segments follow: residues 30-50 (LVVL…HPLI), 51-71 (AVIS…INMW), 93-115 (ISRS…IMMI), 119-136 (YISG…IYVY), 148-168 (IVIG…SVTG), 175-195 (LVLF…LSLL), 219-239 (IHIL…GLFL), 244-264 (LYEI…FQVF), and 275-295 (MFTY…LSSF).

The protein belongs to the UbiA prenyltransferase family. Protoheme IX farnesyltransferase subfamily.

It localises to the cell inner membrane. The catalysed reaction is heme b + (2E,6E)-farnesyl diphosphate + H2O = Fe(II)-heme o + diphosphate. It participates in porphyrin-containing compound metabolism; heme O biosynthesis; heme O from protoheme: step 1/1. Its function is as follows. Converts heme B (protoheme IX) to heme O by substitution of the vinyl group on carbon 2 of heme B porphyrin ring with a hydroxyethyl farnesyl side group. In Ehrlichia ruminantium (strain Gardel), this protein is Protoheme IX farnesyltransferase.